A 185-amino-acid chain; its full sequence is Large ribosomal subunit protein uL5 (185 aa).

Belongs to the universal ribosomal protein uL5 family. Part of the 50S ribosomal subunit; part of the 5S rRNA/L5/L18/L25 subcomplex. Contacts the 5S rRNA and the P site tRNA. Forms a bridge to the 30S subunit in the 70S ribosome.

In terms of biological role, this is one of the proteins that bind and probably mediate the attachment of the 5S RNA into the large ribosomal subunit, where it forms part of the central protuberance. In the 70S ribosome it contacts protein S13 of the 30S subunit (bridge B1b), connecting the 2 subunits; this bridge is implicated in subunit movement. Contacts the P site tRNA; the 5S rRNA and some of its associated proteins might help stabilize positioning of ribosome-bound tRNAs. In Rhodopseudomonas palustris (strain BisB18), this protein is Large ribosomal subunit protein uL5.